A 159-amino-acid polypeptide reads, in one-letter code: Eukaryotic translation initiation factor 5A-2 (159 aa).

Over residues 1-12 the composition is skewed to basic and acidic residues; it reads MSDEEHQFESKA. The segment at 1–23 is disordered; the sequence is MSDEEHQFESKADAGASKTYPQQ. A Hypusine modification is found at K52.

It belongs to the eIF-5A family. In terms of processing, lys-52 undergoes hypusination, a unique post-translational modification that consists in the addition of a butylamino group from spermidine to lysine side chain, leading to the formation of the unusual amino acid hypusine. eIF-5As are the only known proteins to undergo this modification, which is essential for their function.

Functionally, translation factor that promotes translation elongation and termination, particularly upon ribosome stalling at specific amino acid sequence contexts. Binds between the exit (E) and peptidyl (P) site of the ribosome and promotes rescue of stalled ribosome: specifically required for efficient translation of polyproline-containing peptides as well as other motifs that stall the ribosome. Acts as a ribosome quality control (RQC) cofactor by joining the RQC complex to facilitate peptidyl transfer during CAT tailing step. The protein is Eukaryotic translation initiation factor 5A-2 (EIF-5A2) of Nicotiana plumbaginifolia (Leadwort-leaved tobacco).